A 138-amino-acid chain; its full sequence is Histone H2B.8 (138 aa).

Positions 1–38 (MAPKAAEKKPAGKKPAEKAPAEKLPKAEKKITKEGGSE) are enriched in basic and acidic residues. A disordered region spans residues 1–45 (MAPKAAEKKPAGKKPAEKAPAEKLPKAEKKITKEGGSEKKKKKSK). Ala-2 carries the post-translational modification N,N,N-trimethylalanine; alternate. The residue at position 2 (Ala-2) is a N,N-dimethylalanine; alternate. Position 2 is an N-methylalanine; alternate (Ala-2). Position 4 is an N6-methyllysine (Lys-4). Lys-8 and Lys-13 each carry N6-acetyllysine. Lys-14 carries the post-translational modification N6,N6-dimethyllysine. N6-acetyllysine occurs at positions 18, 23, 29, and 30. Lys-134 is covalently cross-linked (Glycyl lysine isopeptide (Lys-Gly) (interchain with G-Cter in ubiquitin)).

This sequence belongs to the histone H2B family. The nucleosome is a histone octamer containing two molecules each of H2A, H2B, H3 and H4 assembled in one H3-H4 heterotetramer and two H2A-H2B heterodimers. The octamer wraps approximately 147 bp of DNA. Can be acetylated to form H2BK6ac, H2BK33ac and H2BK34ac. Post-translationally, monoubiquitinated by BRE1 to form H2BK143ub1 and deubiquitinated by UBP26. Required for heterochromatic histone H3 di- and trimethylation at H3K4me. May give a specific tag for epigenetic transcriptional activation.

Its subcellular location is the nucleus. It localises to the chromosome. Functionally, core component of nucleosome. Nucleosomes wrap and compact DNA into chromatin, limiting DNA accessibility to the cellular machineries which require DNA as a template. Histones thereby play a central role in transcription regulation, DNA repair, DNA replication and chromosomal stability. DNA accessibility is regulated via a complex set of post-translational modifications of histones, also called histone code, and nucleosome remodeling. This Arabidopsis thaliana (Mouse-ear cress) protein is Histone H2B.8.